Reading from the N-terminus, the 398-residue chain is MRTVEDRSLEFLIRRDREAELPPLASLCCNYFKQRHWRDAFDDEQASLREELWAVKTQLDTIPMEAYTATRNKLFPLALSGEQQQFSNRAGHKLLESMESTGVWMELSKLLCGKSRKRPRDFAFADVCGGPGAFSQALFKAGRKQGWRHLHGYGMTLAGVSGLDWYNSLLNSPQFTCTYGLDGTGDIFKLSNIDCLVSITKAAPMFLVVADGGFSVDFSVANYQETISSRIMYGQWLAALKLLRKGGCCVLKLFDTFSPLSRAVVYLSCFLYSRVHVAKPRHSRVVNSERYLVCVDFLGYPNEAWGRYLDCFYELGFVDNEHVPELMPREWCLQDEIFMADMRDMNMTVATNQMTALQMILNAASAVEEELKAKETTTRTSAESDDSPLSSRESCKDG.

Residues 85-298 (QFSNRAGHKL…ERYLVCVDFL (214 aa)) enclose the RrmJ-type SAM-dependent 2'-O-MTase domain. S-adenosyl-L-methionine-binding residues include glycine 132 and aspartate 211. Lysine 252 serves as the catalytic Proton acceptor. The disordered stretch occupies residues 371–398 (LKAKETTTRTSAESDDSPLSSRESCKDG).

The enzyme catalyses a 5'-end (N(7)-methyl 5'-triphosphoguanosine)-ribonucleoside in mRNA + S-adenosyl-L-methionine = a 5'-end (N(7)-methyl 5'-triphosphoguanosine)-(2'-O-methyl-ribonucleoside) in mRNA + S-adenosyl-L-homocysteine + H(+). Functionally, S-adenosyl-L-methionine-dependent methyltransferase that mediates RNA cap1 2'-O-ribose methylation to the 5'-cap structure of RNAs. Methylates the ribose of the first nucleotide of a m(7)GpppG-capped mRNA to produce m(7)GpppNmp (cap1). The sequence is that of Cap-specific mRNA (nucleoside-2'-O-)-methyltransferase 1 from Leishmania braziliensis.